Here is a 47-residue protein sequence, read N- to C-terminus: Photosystem II reaction center protein K (47 aa).

Positions methionine 1–alanine 10 are excised as a propeptide. The helical transmembrane segment at alanine 20–tryptophan 40 threads the bilayer.

This sequence belongs to the PsbK family. PSII is composed of 1 copy each of membrane proteins PsbA, PsbB, PsbC, PsbD, PsbE, PsbF, PsbH, PsbI, PsbJ, PsbK, PsbL, PsbM, PsbT, PsbX, PsbY, Psb30/Ycf12, peripheral proteins PsbO, CyanoQ (PsbQ), PsbU, PsbV and a large number of cofactors. It forms dimeric complexes.

It localises to the cellular thylakoid membrane. Its function is as follows. One of the components of the core complex of photosystem II (PSII). PSII is a light-driven water:plastoquinone oxidoreductase that uses light energy to abstract electrons from H(2)O, generating O(2) and a proton gradient subsequently used for ATP formation. It consists of a core antenna complex that captures photons, and an electron transfer chain that converts photonic excitation into a charge separation. In Prochlorococcus marinus (strain MIT 9303), this protein is Photosystem II reaction center protein K.